The following is a 1059-amino-acid chain: Carbamoyl phosphate synthase large chain (1059 aa).

Positions 1 to 401 (MPKRTDIHKI…ALLKAVASLE (401 aa)) are carboxyphosphate synthetic domain. Residues Arg129, Arg169, Gly175, Gly176, Lys208, Ile210, Glu215, Gly241, Ile242, His243, Gln284, and Glu298 each contribute to the ATP site. The ATP-grasp 1 domain maps to 133 to 327 (KELMQELGEP…IAKLAAKIAV (195 aa)). Residues Gln284, Glu298, and Asn300 each coordinate Mg(2+). Gln284, Glu298, and Asn300 together coordinate Mn(2+). The interval 402 to 546 (IDQKDLLSKE…YSTYETENES (145 aa)) is oligomerization domain. A carbamoyl phosphate synthetic domain region spans residues 547-929 (RRSAKPSVLV…ALYKAFAGAG (383 aa)). The region spanning 671–861 (DQVIKDLNLR…MAQLATKVIL (191 aa)) is the ATP-grasp 2 domain. ATP is bound by residues Arg707, Ala746, Leu748, Glu752, Gly777, Val778, His779, Ser780, Gln820, and Glu832. Mg(2+)-binding residues include Gln820, Glu832, and Asn834. The Mn(2+) site is built by Gln820, Glu832, and Asn834. Residues 930 to 1059 (MEVPDNGAVL…EMTSFKTTEL (130 aa)) form the MGS-like domain. An allosteric domain region spans residues 930–1059 (MEVPDNGAVL…EMTSFKTTEL (130 aa)).

The protein belongs to the CarB family. Composed of two chains; the small (or glutamine) chain promotes the hydrolysis of glutamine to ammonia, which is used by the large (or ammonia) chain to synthesize carbamoyl phosphate. Tetramer of heterodimers (alpha,beta)4. It depends on Mg(2+) as a cofactor. Mn(2+) is required as a cofactor.

It catalyses the reaction hydrogencarbonate + L-glutamine + 2 ATP + H2O = carbamoyl phosphate + L-glutamate + 2 ADP + phosphate + 2 H(+). The enzyme catalyses hydrogencarbonate + NH4(+) + 2 ATP = carbamoyl phosphate + 2 ADP + phosphate + 2 H(+). The protein operates within amino-acid biosynthesis; L-arginine biosynthesis; carbamoyl phosphate from bicarbonate: step 1/1. It functions in the pathway pyrimidine metabolism; UMP biosynthesis via de novo pathway; (S)-dihydroorotate from bicarbonate: step 1/3. Large subunit of the glutamine-dependent carbamoyl phosphate synthetase (CPSase). CPSase catalyzes the formation of carbamoyl phosphate from the ammonia moiety of glutamine, carbonate, and phosphate donated by ATP, constituting the first step of 2 biosynthetic pathways, one leading to arginine and/or urea and the other to pyrimidine nucleotides. The large subunit (synthetase) binds the substrates ammonia (free or transferred from glutamine from the small subunit), hydrogencarbonate and ATP and carries out an ATP-coupled ligase reaction, activating hydrogencarbonate by forming carboxy phosphate which reacts with ammonia to form carbamoyl phosphate. This chain is Carbamoyl phosphate synthase large chain, found in Limosilactobacillus fermentum (strain NBRC 3956 / LMG 18251) (Lactobacillus fermentum).